A 285-amino-acid polypeptide reads, in one-letter code: Protease HtpX homolog (285 aa).

Transmembrane regions (helical) follow at residues 7 to 27 and 30 to 50; these read TAML…MIGG and GMTI…WFSD. His-131 serves as a coordination point for Zn(2+). The active site involves Glu-132. His-135 contacts Zn(2+). Helical transmembrane passes span 146 to 166 and 177 to 197; these read ISAT…FFGG and IAGI…QMAI. Glu-202 is a Zn(2+) binding site.

It belongs to the peptidase M48B family. The cofactor is Zn(2+).

It localises to the cell inner membrane. This is Protease HtpX homolog from Burkholderia thailandensis (strain ATCC 700388 / DSM 13276 / CCUG 48851 / CIP 106301 / E264).